The chain runs to 1215 residues: Protein benign gonial cell neoplasm (1215 aa).

The stretch at 407-439 is one ANK repeat; sequence TGKTAVHFASELNKANHLRLLLFMGADPYIVDL. Position 898 is a phosphothreonine (T898).

Part of a complex composed of at least mei-P26, bam, bgcn and Sxl; this complex is involved in translational repression of nanos mRNA. Interacts with bam (via C-terminus); the interaction is direct. Interacts with mei-P26; the interaction is direct and does not require bam. Weakly interacts with wh/wuho; this interaction may be required for the function or formation of the mei-P26-bgcn-bam-Sxl complex. Part of a complex composed of at least tut, bam and bgcn; complex formation does not require RNA. Interacts with tut; the interaction is indirect and is mediated by bam. As part of the bam-bgcn-tut complex associates with twin; may recruit the CCR4-NOT1 deadenylation complex to mRNA 3'UTRs to mediate post-transcriptional regulation of expression. In terms of tissue distribution, expressed in testis and in 5-8 germline stem cells of ovaries, immediately adjacent to terminal filament. Expressed in ovarian germline cells throughout the germarium (at protein level).

Its function is as follows. Forms a complex with tut and bam involved in 3'UTR-dependent post-transcriptional repression of several 3'-RNA processing factors, which promotes germline stem cell lineage differentiation and mitosis-to-meiosis transition. Part of a complex with bam involved in 3'-UTR-dependent translational repression of a subset of mRNAs, including those for mei-P26, nanos and shg/E-cadherin; may act as a promiscuous RNA-binding protein tethering bam to its target mRNAs. Required for regulating the progression of gonialblast cells through transit amplification and differentiation into gametes. In Drosophila melanogaster (Fruit fly), this protein is Protein benign gonial cell neoplasm.